The primary structure comprises 477 residues: Octopamine receptor (477 aa).

At 1–55 the chain is on the extracellular side; the sequence is MGQAATHVDANYTLINYTEEVIEDDRDACAVADDPKYPSSFGITLAVPEWEAICT. N11 and N16 each carry an N-linked (GlcNAc...) asparagine glycan. Residues 56–78 traverse the membrane as a helical segment; the sequence is AIVLTLIIISTIVGNILVILSVF. Residues 79 to 88 are Cytoplasmic-facing; the sequence is TYKPLRIVQN. Residues 89 to 110 traverse the membrane as a helical segment; sequence FFIVSLAVADLTVAILVLPLNV. The Extracellular portion of the chain corresponds to 111–127; it reads AYSILGQWVFGIYVCKM. A helical transmembrane segment spans residues 128-148; that stretch reads WLTCDIMCCTSSILNLCAIAL. The Cytoplasmic portion of the chain corresponds to 149 to 168; the sequence is DRYWAITDPINYAQKRTLER. A helical membrane pass occupies residues 169–191; it reads VLLMIGVVWVLSLIISSPPLLGW. Residues 192–216 are Extracellular-facing; it reads NDWPDVFEPDTPCRLTSQPGFVIFS. The helical transmembrane segment at 217–238 threads the bilayer; the sequence is SSGSFYIPLVIMTVVYFEIYLA. Topologically, residues 239–405 are cytoplasmic; sequence TKKRLRDRAK…LTRERRAART (167 aa). 2 disordered regions span residues 256 to 317 and 334 to 358; these read SSGQ…SKDD and VTDMGENLENRNTSSESNSKETHED. 2 stretches are compositionally biased toward basic and acidic residues: residues 263 to 272 and 279 to 295; these read NNKDDHHDQD and NHNEHQGVTRLVSDNEK. Residues 296–312 are compositionally biased toward basic residues; sequence KKRTRKLTPKKKPKRKY. A helical membrane pass occupies residues 406–427; sequence LGIIMGVFVVCWLPFFVIYLVI. Topologically, residues 428–439 are extracellular; it reads PFCASCCLSNKF. A helical membrane pass occupies residues 440–460; sequence INFITWLGYCNSALNPLIYTI. Topologically, residues 461–477 are cytoplasmic; it reads FNMDFRRAFKKLLCMKP.

It belongs to the G-protein coupled receptor 1 family.

Its subcellular location is the cell membrane. Functionally, receptor for octopamine. Octopamine (OA) is a neurotransmitter, neurohormone, and neuromodulator in invertebrates. The activity of this receptor is mediated by G proteins which activate adenylyl cyclase. This chain is Octopamine receptor, found in Heliothis virescens (Tobacco budworm moth).